The primary structure comprises 157 residues: Phosphopantetheine adenylyltransferase (157 aa).

Serine 9 lines the substrate pocket. Residues serine 9–phenylalanine 10 and histidine 17 contribute to the ATP site. Residues lysine 41, leucine 73, and lysine 87 each contribute to the substrate site. Residues glycine 88 to arginine 90, glutamate 98, and tyrosine 123 to serine 129 each bind ATP.

It belongs to the bacterial CoaD family. Homohexamer. Mg(2+) is required as a cofactor.

It is found in the cytoplasm. The enzyme catalyses (R)-4'-phosphopantetheine + ATP + H(+) = 3'-dephospho-CoA + diphosphate. The protein operates within cofactor biosynthesis; coenzyme A biosynthesis; CoA from (R)-pantothenate: step 4/5. In terms of biological role, reversibly transfers an adenylyl group from ATP to 4'-phosphopantetheine, yielding dephospho-CoA (dPCoA) and pyrophosphate. In Alkaliphilus metalliredigens (strain QYMF), this protein is Phosphopantetheine adenylyltransferase.